The primary structure comprises 259 residues: Major cell-binding factor (259 aa).

An N-terminal signal peptide occupies residues 1-26 (MVFRKSLLKLAVFALGACVAFSNANA).

The protein belongs to the bacterial solute-binding protein 3 family.

Its subcellular location is the cell surface. Functionally, common antigen and a major cell adherence molecule. Most probably involved, with PEB1C, in a binding-protein-dependent transport system for an amino acid. May be involved in binding to intestinal cells. The polypeptide is Major cell-binding factor (peb1A) (Campylobacter jejuni subsp. jejuni serotype O:23/36 (strain 81-176)).